A 96-amino-acid polypeptide reads, in one-letter code: Early E1A 11 kDa protein (96 aa).

2 disordered regions span residues methionine 1–glutamine 29 and leucine 72–aspartate 96. Over residues glycine 75–aspartate 96 the composition is skewed to acidic residues.

This is Early E1A 11 kDa protein from Murine adenovirus A serotype 1 (MAdV-1).